The sequence spans 328 residues: scyllo-inositol 2-dehydrogenase (NADP(+)) IolU (328 aa).

It belongs to the Gfo/Idh/MocA family.

The enzyme catalyses scyllo-inositol + NADP(+) = scyllo-inosose + NADPH + H(+). In terms of biological role, catalyzes the NADPH-dependent reduction of scyllo-inosose (SIS) to scyllo-inositol (SI) in vitro, but is unable to dehydrogenate scyllo-inositol and myo-inositol. Is less efficient than the functional paralog IolW. Under physiological conditions, may primarily function as an NADPH-dependent oxidoreductase that reduces carbonyl group(s) in its substrates. Cannot use NADH instead of NADPH. This Bacillus subtilis (strain 168) protein is scyllo-inositol 2-dehydrogenase (NADP(+)) IolU.